Here is an 84-residue protein sequence, read N- to C-terminus: Large ribosomal subunit protein bL27 (84 aa).

The segment at 1–22 (MAHKKGASSTRNGRDSNAQRLG) is disordered. A compositionally biased stretch (polar residues) spans 7–19 (ASSTRNGRDSNAQ).

It belongs to the bacterial ribosomal protein bL27 family.

This Streptomyces coelicolor (strain ATCC BAA-471 / A3(2) / M145) protein is Large ribosomal subunit protein bL27.